Reading from the N-terminus, the 1065-residue chain is WD repeat-containing protein on Y chromosome (1065 aa).

WD repeat units lie at residues E153 to A197, R326 to A365, G369 to T408, T459 to I498, I511 to N550, F598 to S638, K745 to A784, and A828 to L867. A compositionally biased stretch (basic and acidic residues) spans P915–E925. Disordered regions lie at residues P915–D936 and G1024–E1065. Residues D926–D936 are compositionally biased toward acidic residues.

The protein is WD repeat-containing protein on Y chromosome of Drosophila persimilis (Fruit fly).